Reading from the N-terminus, the 467-residue chain is Plasma alpha-L-fucosidase (467 aa).

Positions 1-28 are cleaved as a signal peptide; sequence MRPQELPRLAFPLLLLLLLLLPPPPCPA. N-linked (GlcNAc...) asparagine glycans are attached at residues Asn-171 and Asn-239. Ser-301 is modified (phosphoserine; by FAM20C). Residue Asn-377 is glycosylated (N-linked (GlcNAc...) asparagine).

It belongs to the glycosyl hydrolase 29 family. In terms of assembly, homotetramer.

The protein localises to the secreted. It carries out the reaction an alpha-L-fucoside + H2O = L-fucose + an alcohol. Alpha-L-fucosidase is responsible for hydrolyzing the alpha-1,6-linked fucose joined to the reducing-end N-acetylglucosamine of the carbohydrate moieties of glycoproteins. The chain is Plasma alpha-L-fucosidase (FUCA2) from Homo sapiens (Human).